We begin with the raw amino-acid sequence, 435 residues long: Putative magnesium transporter MRS2-H (435 aa).

The segment at 19–54 (FSSSPESRRCRSVHRVPSRPRPPLAPPARVMGKGNS) is disordered. A run of 2 helical transmembrane segments spans residues 369–389 (LTLIIASFGIAINTFIAAAFA) and 408–428 (FVGATSFLCMSIVILLFTYAW).

It belongs to the CorA metal ion transporter (MIT) (TC 1.A.35.5) family.

The protein resides in the membrane. Its function is as follows. Putative magnesium transporter. The chain is Putative magnesium transporter MRS2-H (MRS2-H) from Oryza sativa subsp. indica (Rice).